The sequence spans 217 residues: LexA repressor (217 aa).

Residues 28–48 (RAEIAAEFGFSSPNAAEEHLR) constitute a DNA-binding region (H-T-H motif). Residues S136 and K173 each act as for autocatalytic cleavage activity in the active site.

The protein belongs to the peptidase S24 family. As to quaternary structure, homodimer.

The enzyme catalyses Hydrolysis of Ala-|-Gly bond in repressor LexA.. Its function is as follows. Represses a number of genes involved in the response to DNA damage (SOS response), including recA and lexA. In the presence of single-stranded DNA, RecA interacts with LexA causing an autocatalytic cleavage which disrupts the DNA-binding part of LexA, leading to derepression of the SOS regulon and eventually DNA repair. The chain is LexA repressor from Cupriavidus taiwanensis (strain DSM 17343 / BCRC 17206 / CCUG 44338 / CIP 107171 / LMG 19424 / R1) (Ralstonia taiwanensis (strain LMG 19424)).